The following is a 105-amino-acid chain: Flexible cuticle protein 12 (105 aa).

A signal peptide spans 1-16 (MKSFVVVALLVAVAAA). Residues 37–105 (VEGFQYGYET…KPVGAHIPVA (69 aa)) form the Chitin-binding type R&amp;R domain.

The polypeptide is Flexible cuticle protein 12 (CP12) (Hyalophora cecropia (Cecropia moth)).